We begin with the raw amino-acid sequence, 1073 residues long: Duffy receptor alpha form (1073 aa).

Positions 1-21 (MEGKKKRPLFFLLVLLLSHKA) are cleaved as a signal peptide. The Extracellular segment spans residues 22-1007 (NNVLFERMNG…YECFTKGSST (986 aa)). Asn134, Asn179, and Asn202 each carry an N-linked (GlcNAc...) asparagine glycan. Cystine bridges form between Cys214/Cys243 and Cys227/Cys234. Asn252 and Asn348 each carry an N-linked (GlcNAc...) asparagine glycan. 4 cysteine pairs are disulfide-bonded: Cys297/Cys374, Cys412/Cys429, Cys424/Cys504, and Cys433/Cys502. Residues 517-915 (VKNVGSGVES…LNNRKLNRDQ (399 aa)) are disordered. Residues 528–543 (AASSNPITEAVKSSSG) show a composition bias toward polar residues. The span at 546–561 (KVQEDSAHKSVNKGEG) shows a compositional bias: basic and acidic residues. Over residues 562 to 576 (KSSTNEADPGSQSGA) the composition is skewed to polar residues. Composition is skewed to basic and acidic residues over residues 675–710 (GEVH…DDRS) and 717–734 (HTDE…KDTE). Asn679 is a glycosylation site (N-linked (GlcNAc...) asparagine). A compositionally biased stretch (polar residues) spans 736-766 (AGGSTLTPEQNVSVASDNGNVPGSGNKQNEG). 3 N-linked (GlcNAc...) asparagine glycosylation sites follow: Asn746, Asn779, and Asn788. The span at 799-810 (GNEKDFQKHDFM) shows a compositional bias: basic and acidic residues. 2 stretches are compositionally biased toward low complexity: residues 821-843 (SDHT…SSDH) and 851-864 (SDQT…SDQT). Positions 867–891 (TEGHHRDNVRNPEIKSSEDMSKGDF) are enriched in basic and acidic residues. Residues 893–909 (RNSNSNELYSHNNLNNR) are compositionally biased toward polar residues. The chain crosses the membrane as a helical span at residues 1008-1029 (GIVYFATGGAFLIILLLFASWN). Residues 1030-1073 (AASNDYEEEATFDEFVEYSDDIHRTPLMPNDIEHMQQFTPLDYS) are Cytoplasmic-facing.

As to quaternary structure, interacts (via region II) with human ACKR1 (via N-terminal extracellular domain). Interacts (via region II) with rhesus macaque ACKR1 (via N-terminal extracellular domain).

It is found in the cell membrane. Its subcellular location is the cytoplasmic vesicle. The protein resides in the secretory vesicle. The protein localises to the microneme. Its function is as follows. Binds to the human erythrocyte Duffy blood group determinant (ACKR1). Binds to the rhesus macaque erythrocyte Duffy blood group determinant (ACKR1). In Plasmodium knowlesi, this protein is Duffy receptor alpha form.